A 261-amino-acid polypeptide reads, in one-letter code: tRNA pseudouridine synthase A (261 aa).

Catalysis depends on aspartate 52, which acts as the Nucleophile. Tyrosine 111 contributes to the substrate binding site.

This sequence belongs to the tRNA pseudouridine synthase TruA family. Homodimer.

The catalysed reaction is uridine(38/39/40) in tRNA = pseudouridine(38/39/40) in tRNA. Its function is as follows. Formation of pseudouridine at positions 38, 39 and 40 in the anticodon stem and loop of transfer RNAs. The protein is tRNA pseudouridine synthase A of Jannaschia sp. (strain CCS1).